Here is a 426-residue protein sequence, read N- to C-terminus: Chaperone SurA (426 aa).

Positions 1-13 (MLGALFLSTAASA) are cleaved as a signal peptide. PpiC domains are found at residues 164–265 (SEEL…KLLD) and 274–373 (RDEV…EVLG).

Its subcellular location is the periplasm. It carries out the reaction [protein]-peptidylproline (omega=180) = [protein]-peptidylproline (omega=0). In terms of biological role, chaperone involved in the correct folding and assembly of outer membrane proteins. Recognizes specific patterns of aromatic residues and the orientation of their side chains, which are found more frequently in integral outer membrane proteins. May act in both early periplasmic and late outer membrane-associated steps of protein maturation. The sequence is that of Chaperone SurA from Pseudomonas fluorescens (strain ATCC BAA-477 / NRRL B-23932 / Pf-5).